A 142-amino-acid chain; its full sequence is Large ribosomal subunit protein uL13 (142 aa).

Belongs to the universal ribosomal protein uL13 family. As to quaternary structure, part of the 50S ribosomal subunit.

This protein is one of the early assembly proteins of the 50S ribosomal subunit, although it is not seen to bind rRNA by itself. It is important during the early stages of 50S assembly. This Buchnera aphidicola subsp. Acyrthosiphon pisum (strain 5A) protein is Large ribosomal subunit protein uL13.